A 520-amino-acid chain; its full sequence is tRNA-2-methylthio-N(6)-dimethylallyladenosine synthase (520 aa).

The 119-residue stretch at lysine 77–phenylalanine 195 folds into the MTTase N-terminal domain. Cysteine 86, cysteine 122, cysteine 156, cysteine 232, cysteine 236, and cysteine 239 together coordinate [4Fe-4S] cluster. One can recognise a Radical SAM core domain in the interval arginine 218–arginine 448. The TRAM domain maps to leucine 450–serine 513.

It belongs to the methylthiotransferase family. MiaB subfamily. Monomer. Requires [4Fe-4S] cluster as cofactor.

It localises to the cytoplasm. It catalyses the reaction N(6)-dimethylallyladenosine(37) in tRNA + (sulfur carrier)-SH + AH2 + 2 S-adenosyl-L-methionine = 2-methylsulfanyl-N(6)-dimethylallyladenosine(37) in tRNA + (sulfur carrier)-H + 5'-deoxyadenosine + L-methionine + A + S-adenosyl-L-homocysteine + 2 H(+). Its function is as follows. Catalyzes the methylthiolation of N6-(dimethylallyl)adenosine (i(6)A), leading to the formation of 2-methylthio-N6-(dimethylallyl)adenosine (ms(2)i(6)A) at position 37 in tRNAs that read codons beginning with uridine. This Shouchella clausii (strain KSM-K16) (Alkalihalobacillus clausii) protein is tRNA-2-methylthio-N(6)-dimethylallyladenosine synthase.